The sequence spans 353 residues: Photosystem II protein D1 (353 aa).

At threonine 2 the chain carries N-acetylthreonine. Residue threonine 2 is modified to Phosphothreonine. The next 3 helical transmembrane spans lie at tyrosine 29–serine 46, histidine 118–leucine 133, and tryptophan 142–alanine 156. Histidine 118 provides a ligand contact to chlorophyll a. A pheophytin a-binding site is contributed by tyrosine 126. Residues aspartate 170 and glutamate 189 each contribute to the [CaMn4O5] cluster site. Residues phenylalanine 197 to leucine 218 traverse the membrane as a helical segment. Histidine 198 provides a ligand contact to chlorophyll a. Residues histidine 215 and serine 264 to phenylalanine 265 each bind a quinone. Histidine 215 is a Fe cation binding site. Histidine 272 serves as a coordination point for Fe cation. A helical transmembrane segment spans residues phenylalanine 274–leucine 288. Residues histidine 332, glutamate 333, aspartate 342, and alanine 344 each contribute to the [CaMn4O5] cluster site. A propeptide spanning residues alanine 345–glycine 353 is cleaved from the precursor.

It belongs to the reaction center PufL/M/PsbA/D family. As to quaternary structure, PSII is composed of 1 copy each of membrane proteins PsbA, PsbB, PsbC, PsbD, PsbE, PsbF, PsbH, PsbI, PsbJ, PsbK, PsbL, PsbM, PsbT, PsbX, PsbY, PsbZ, Psb30/Ycf12, at least 3 peripheral proteins of the oxygen-evolving complex and a large number of cofactors. It forms dimeric complexes. The cofactor is The D1/D2 heterodimer binds P680, chlorophylls that are the primary electron donor of PSII, and subsequent electron acceptors. It shares a non-heme iron and each subunit binds pheophytin, quinone, additional chlorophylls, carotenoids and lipids. D1 provides most of the ligands for the Mn4-Ca-O5 cluster of the oxygen-evolving complex (OEC). There is also a Cl(-1) ion associated with D1 and D2, which is required for oxygen evolution. The PSII complex binds additional chlorophylls, carotenoids and specific lipids.. In terms of processing, tyr-161 forms a radical intermediate that is referred to as redox-active TyrZ, YZ or Y-Z. C-terminally processed by CTPA; processing is essential to allow assembly of the oxygen-evolving complex and thus photosynthetic growth.

It is found in the plastid. The protein localises to the chloroplast thylakoid membrane. It catalyses the reaction 2 a plastoquinone + 4 hnu + 2 H2O = 2 a plastoquinol + O2. Photosystem II (PSII) is a light-driven water:plastoquinone oxidoreductase that uses light energy to abstract electrons from H(2)O, generating O(2) and a proton gradient subsequently used for ATP formation. It consists of a core antenna complex that captures photons, and an electron transfer chain that converts photonic excitation into a charge separation. The D1/D2 (PsbA/PsbD) reaction center heterodimer binds P680, the primary electron donor of PSII as well as several subsequent electron acceptors. The sequence is that of Photosystem II protein D1 from Oenothera parviflora (Small-flowered evening primrose).